The following is a 97-amino-acid chain: Large ribosomal subunit protein uL23 (97 aa).

It belongs to the universal ribosomal protein uL23 family. In terms of assembly, part of the 50S ribosomal subunit. Contacts protein L29, and trigger factor when it is bound to the ribosome.

One of the early assembly proteins it binds 23S rRNA. One of the proteins that surrounds the polypeptide exit tunnel on the outside of the ribosome. Forms the main docking site for trigger factor binding to the ribosome. This is Large ribosomal subunit protein uL23 from Limosilactobacillus fermentum (strain NBRC 3956 / LMG 18251) (Lactobacillus fermentum).